We begin with the raw amino-acid sequence, 344 residues long: Protein YIPF3 (344 aa).

Over residues methionine 1–alanine 12 the composition is skewed to polar residues. The segment at methionine 1 to glutamine 24 is disordered. Topologically, residues methionine 1 to lysine 146 are cytoplasmic. A helical membrane pass occupies residues valine 147 to histidine 167. The Lumenal portion of the chain corresponds to glycine 168–alanine 185. Residues isoleucine 186–leucine 206 traverse the membrane as a helical segment. At cysteine 207–threonine 212 the chain is on the cytoplasmic side. The chain crosses the membrane as a helical span at residues methionine 213–isoleucine 233. Over threonine 234–leucine 242 the chain is Lumenal. The chain crosses the membrane as a helical span at residues phenylalanine 243–isoleucine 263. Residues serine 264 to arginine 272 are Cytoplasmic-facing. The helical transmembrane segment at leucine 273 to alanine 293 threads the bilayer. Residues tyrosine 294–leucine 344 lie on the Lumenal side of the membrane. An N-linked (GlcNAc...) asparagine glycan is attached at asparagine 329.

The protein belongs to the YIP1 family.

It is found in the cell membrane. The protein localises to the golgi apparatus. It localises to the cis-Golgi network membrane. The protein resides in the cytoplasm. Its function is as follows. Involved in the maintenance of the Golgi structure. May play a role in hematopoiesis. This Danio rerio (Zebrafish) protein is Protein YIPF3 (yipf3).